Consider the following 180-residue polypeptide: Inner membrane-spanning protein YciB (180 aa).

The next 5 membrane-spanning stretches (helical) occupy residues 25–45 (QNATLYMLITSVICITLCYVI), 49–69 (VSKLSIISTTVLLVSGSITLI), 76–96 (IKIKPTILYVIFGIIFLMSGI), 118–138 (IILSYRTAAFFFFMAVVNEIV), and 150–170 (FKVFGVIPVTFIFILLQLPLL).

This sequence belongs to the YciB family.

The protein localises to the cell inner membrane. Its function is as follows. Plays a role in cell envelope biogenesis, maintenance of cell envelope integrity and membrane homeostasis. The polypeptide is Inner membrane-spanning protein YciB (Rickettsia felis (strain ATCC VR-1525 / URRWXCal2) (Rickettsia azadi)).